The primary structure comprises 39 residues: TTVFLADIKSNCPSRVSFQVAALPGARVEIEAIAIQGPI.

The protein belongs to the RutC family. In terms of assembly, monomer. The N-terminus may be blocked. In terms of tissue distribution, mainly expressed in the liver and kidney. Lower expression found in intestine, gizzard, glandular stomach, heart, brain and spleen.

It localises to the cytoplasm. Its function is as follows. Endoribonuclease responsible for the inhibition of the translation by cleaving mRNA. Inhibits cell-free protein synthesis. Cleaves phosphodiester bonds only in single-stranded RNA. This chain is Ribonuclease UK114, found in Gallus gallus (Chicken).